Here is a 715-residue protein sequence, read N- to C-terminus: Fatty acid oxidation complex subunit alpha (715 aa).

The segment at 1-190 (MIYEGKAITV…KVGAVDAVVA (190 aa)) is enoyl-CoA hydratase/isomerase. Aspartate 297 lines the substrate pocket. The tract at residues 312 to 715 (KDVKQAAVLG…MAKNGQSFFG (404 aa)) is 3-hydroxyacyl-CoA dehydrogenase. Residues methionine 325, aspartate 344, 401–403 (VVE), lysine 408, and serine 430 each bind NAD(+). Residue histidine 451 is the For 3-hydroxyacyl-CoA dehydrogenase activity of the active site. Asparagine 454 is an NAD(+) binding site. Residues asparagine 501 and tyrosine 660 each coordinate substrate.

In the N-terminal section; belongs to the enoyl-CoA hydratase/isomerase family. The protein in the C-terminal section; belongs to the 3-hydroxyacyl-CoA dehydrogenase family. In terms of assembly, heterotetramer of two alpha chains (FadB) and two beta chains (FadA).

The catalysed reaction is a (3S)-3-hydroxyacyl-CoA + NAD(+) = a 3-oxoacyl-CoA + NADH + H(+). The enzyme catalyses a (3S)-3-hydroxyacyl-CoA = a (2E)-enoyl-CoA + H2O. It catalyses the reaction a 4-saturated-(3S)-3-hydroxyacyl-CoA = a (3E)-enoyl-CoA + H2O. It carries out the reaction (3S)-3-hydroxybutanoyl-CoA = (3R)-3-hydroxybutanoyl-CoA. The catalysed reaction is a (3Z)-enoyl-CoA = a 4-saturated (2E)-enoyl-CoA. The enzyme catalyses a (3E)-enoyl-CoA = a 4-saturated (2E)-enoyl-CoA. The protein operates within lipid metabolism; fatty acid beta-oxidation. Its function is as follows. Involved in the aerobic and anaerobic degradation of long-chain fatty acids via beta-oxidation cycle. Catalyzes the formation of 3-oxoacyl-CoA from enoyl-CoA via L-3-hydroxyacyl-CoA. It can also use D-3-hydroxyacyl-CoA and cis-3-enoyl-CoA as substrate. This is Fatty acid oxidation complex subunit alpha from Pseudomonas fluorescens (strain ATCC BAA-477 / NRRL B-23932 / Pf-5).